Consider the following 409-residue polypeptide: Tyrosine--tRNA ligase (409 aa).

A 'HIGH' region motif is present at residues 54-63 (PTAPDIHLGH). A 'KMSKS' region motif is present at residues 238 to 242 (KMSKS). Lysine 241 contacts ATP. In terms of domain architecture, S4 RNA-binding spans 347–407 (QGILRILREA…GKRKFARVKL (61 aa)).

Belongs to the class-I aminoacyl-tRNA synthetase family. TyrS type 2 subfamily. Homodimer.

Its subcellular location is the cytoplasm. The enzyme catalyses tRNA(Tyr) + L-tyrosine + ATP = L-tyrosyl-tRNA(Tyr) + AMP + diphosphate + H(+). Functionally, catalyzes the attachment of tyrosine to tRNA(Tyr) in a two-step reaction: tyrosine is first activated by ATP to form Tyr-AMP and then transferred to the acceptor end of tRNA(Tyr). The chain is Tyrosine--tRNA ligase from Bordetella bronchiseptica (strain ATCC BAA-588 / NCTC 13252 / RB50) (Alcaligenes bronchisepticus).